Reading from the N-terminus, the 152-residue chain is Deoxyuridine 5'-triphosphate nucleotidohydrolase (152 aa).

Substrate contacts are provided by residues 71–73 (RSG), Asn84, 88–90 (LID), and Met98.

It belongs to the dUTPase family. Mg(2+) is required as a cofactor.

The enzyme catalyses dUTP + H2O = dUMP + diphosphate + H(+). The protein operates within pyrimidine metabolism; dUMP biosynthesis; dUMP from dCTP (dUTP route): step 2/2. In terms of biological role, this enzyme is involved in nucleotide metabolism: it produces dUMP, the immediate precursor of thymidine nucleotides and it decreases the intracellular concentration of dUTP so that uracil cannot be incorporated into DNA. The polypeptide is Deoxyuridine 5'-triphosphate nucleotidohydrolase (Shewanella baltica (strain OS185)).